A 751-amino-acid chain; its full sequence is CCR4-NOT transcription complex subunit 3 (751 aa).

The segment at 240 to 534 (ATSPPSHSHM…QFSTTPEIKA (295 aa)) is disordered. A compositionally biased stretch (low complexity) spans 257-268 (SSSTPTSTTSSS). A compositionally biased stretch (basic and acidic residues) spans 284–293 (DDKKRGRSTD). Threonine 292 bears the Phosphothreonine mark. Over residues 294 to 315 (SEVSQSPAKNGSKPVHSNQHPQ) the composition is skewed to polar residues. Serine 299 is subject to Phosphoserine. Residues 317–330 (PAVPPTYPSGPPPT) show a composition bias toward pro residues. Residues 339 to 348 (GNNGASTPAA) show a composition bias toward polar residues. Low complexity predominate over residues 441–450 (SSSGGSSASS). A compositionally biased stretch (polar residues) spans 463–472 (APSTSKESST). Residues 473–498 (AAPSGAGNVASGSGNNSGGPSLLVPL) are compositionally biased toward low complexity. A Phosphoserine modification is found at serine 540. The interval 659–751 (EFYQRLSTET…YRYLEDRDLQ (93 aa)) is repressor domain.

The protein belongs to the CNOT2/3/5 family. Component of the CCR4-NOT complex; distinct complexes seem to exist that differ in the participation of probably mutually exclusive catalytic subunits. In the complex interacts directly with CNOT2. Interacts with TIP120B and NANOS2. Interacts with EBF1. Interacts in an RNA-independent manner with BICC1 (via KH domains).

It is found in the nucleus. The protein localises to the cytoplasm. It localises to the P-body. Component of the CCR4-NOT complex which is one of the major cellular mRNA deadenylases and is linked to various cellular processes including bulk mRNA degradation, miRNA-mediated repression, translational repression during translational initiation and general transcription regulation. Additional complex functions may be a consequence of its influence on mRNA expression. May be involved in metabolic regulation; may be involved in recruitment of the CCR4-NOT complex to deadenylation target mRNAs involved in energy metabolism. Involved in mitotic progression and regulation of the spindle assembly checkpoint by regulating the stability of MAD1L1 mRNA. Can repress transcription and may link the CCR4-NOT complex to transcriptional regulation; the repressive function may involve histone deacetylases. Involved in the maintenance of embryonic stem (ES) cell identity; prevents their differentiation towards extraembryonic trophectoderm lineages. This chain is CCR4-NOT transcription complex subunit 3 (Cnot3), found in Mus musculus (Mouse).